Reading from the N-terminus, the 399-residue chain is Long-chain primary alcohol dehydrogenase AdhA (399 aa).

Belongs to the iron-containing alcohol dehydrogenase family. As to quaternary structure, homotetramer. The cofactor is Zn(2+).

It catalyses the reaction a primary alcohol + NADP(+) = an aldehyde + NADPH + H(+). Functionally, alcohol dehydrogenase active against primary long-chain alcohols. Pentan-1-ol is the optimum substrate in vitro, but also shows efficient dehydrogenase activity on propanol, hexanol, and ethanol. The protein is Long-chain primary alcohol dehydrogenase AdhA (adhA) of Thermoanaerobacter ethanolicus (Clostridium thermohydrosulfuricum).